A 556-amino-acid chain; its full sequence is MDNAELAIGIDLGTTNSLIAVWKDGAAQLIPNKFGEYLTPSIISMDENNHILVGKPAVSRRTSHPDKTAALFKRAMGSNTNWRLGSDTFNAPELSSLVLRSLKEDAEEFLQRPIKDVVISVPAYFSDEQRKHTRLAAELAGLNAVRLINEPTAAAMAYGLHTQQNTRSLVFDLGGGTFDVTVLEYATPVIEVHASAGDNFLGGEDFTHMLVDEVLKRADVARTTLNESELAALYACVEAAKCSNQSPLHIRWQYQEETRECEFYENELEDLWLPLLNRLRVPIEQALRDARLKPSQIDSLVLVGGASQMPLVQRIAVRLFGKLPYQSYDPSTIVALGAAIQAACRLRSEDIEEVILTDICPYSLGVEVNRQGVSGIFSPIIERNTTVPVSRVETYSTMHPEQDSITVNVYQGENHKVKNNILVESFDVPLKKTGAYQSIDIRFSYDINGLLEVDVLLEDGSVKSRVINHSPVTLSAQQIEESRTRLSALKIYPRDMLINRTFKAKLEELWARALGDEREEIGRVITDFDAALQSNDMARVDEVRRRASDYLAIEIP.

Belongs to the heat shock protein 70 family.

Functionally, probable chaperone. Has ATPase activity. Not stimulated by DnaJ. The chain is Chaperone protein HscC (hscC) from Escherichia coli (strain K12).